A 509-amino-acid polypeptide reads, in one-letter code: Glycogen synthase 2 (509 aa).

K15 lines the ADP-alpha-D-glucose pocket.

This sequence belongs to the glycosyltransferase 1 family. Bacterial/plant glycogen synthase subfamily.

The enzyme catalyses [(1-&gt;4)-alpha-D-glucosyl](n) + ADP-alpha-D-glucose = [(1-&gt;4)-alpha-D-glucosyl](n+1) + ADP + H(+). It functions in the pathway glycan biosynthesis; glycogen biosynthesis. Its function is as follows. Synthesizes alpha-1,4-glucan chains using ADP-glucose. This is Glycogen synthase 2 (glgA2) from Agrobacterium fabrum (strain C58 / ATCC 33970) (Agrobacterium tumefaciens (strain C58)).